Here is a 112-residue protein sequence, read N- to C-terminus: uncharacterized protein (112 aa).

2 consecutive transmembrane segments (helical) span residues 44-63 (VITG…LHSL) and 68-90 (LAAL…KLVH).

It is found in the cell membrane. This is an uncharacterized protein from Archaeoglobus fulgidus (strain ATCC 49558 / DSM 4304 / JCM 9628 / NBRC 100126 / VC-16).